Consider the following 150-residue polypeptide: PTS system galactitol-specific EIIA component (150 aa).

The 144-residue stretch at 1-144 (MTNLFVRSGI…TQLKEYFTKY (144 aa)) folds into the PTS EIIA type-2 domain. His62 functions as the Tele-phosphohistidine intermediate in the catalytic mechanism. His62 bears the Phosphohistidine; by HPr mark.

Forms a complex with one each of subunit of GatA, GatB and 2 subunits of GatC.

It is found in the cytoplasm. In terms of biological role, the phosphoenolpyruvate-dependent sugar phosphotransferase system (sugar PTS), a major carbohydrate active transport system, catalyzes the phosphorylation of incoming sugar substrates concomitantly with their translocation across the cell membrane. The enzyme II complex composed of GatA, GatB and GatC is involved in galactitol transport. This Escherichia coli O157:H7 protein is PTS system galactitol-specific EIIA component (gatA).